The sequence spans 86 residues: U15-lycotoxin-Ls1d (86 aa).

The N-terminal stretch at 1–20 (MNSKIFAVLLLLAFLSCVLS) is a signal peptide. Residues 21 to 66 (DQYCPKSSITACKKMNIRNDCCKDDDCTGGSWCCATPCGNFCKYPT) enclose the WAP domain. 5 disulfides stabilise this stretch: cysteine 24–cysteine 54, cysteine 32–cysteine 58, cysteine 41–cysteine 53, cysteine 42–cysteine 80, and cysteine 47–cysteine 62.

This sequence belongs to the venom protein 11 family. 01 (wap-1) subfamily. In terms of processing, contains 5 disulfide bonds. As to expression, expressed by the venom gland.

It localises to the secreted. Has antibacterial activity. This Lycosa singoriensis (Wolf spider) protein is U15-lycotoxin-Ls1d.